The sequence spans 189 residues: Capsid protein (189 aa).

The residue at position 1 (methionine 1) is an N-acetylmethionine; by host.

It belongs to the tymoviruses capsid protein family.

It localises to the virion. Self-assembles to form a T=3 icosahedral capsid composed of 180 copies of the capsid protein. The capsid encapsulates the single-stranded RNA genome. A pentameric unit may be lost during decapsidation. This is Capsid protein from Brassica (Chinese cabbage).